The primary structure comprises 131 residues: Profilin-1 (131 aa).

The protein belongs to the profilin family. Occurs in many kinds of cells as a complex with monomeric actin in a 1:1 ratio.

It is found in the cytoplasm. The protein localises to the cytoskeleton. Binds to actin and affects the structure of the cytoskeleton. At high concentrations, profilin prevents the polymerization of actin, whereas it enhances it at low concentrations. By binding to PIP2, it inhibits the formation of IP3 and DG. The polypeptide is Profilin-1 (Hevea brasiliensis (Para rubber tree)).